A 566-amino-acid chain; its full sequence is Proline--tRNA ligase (566 aa).

The protein belongs to the class-II aminoacyl-tRNA synthetase family. ProS type 1 subfamily. As to quaternary structure, homodimer.

It is found in the cytoplasm. It carries out the reaction tRNA(Pro) + L-proline + ATP = L-prolyl-tRNA(Pro) + AMP + diphosphate. Catalyzes the attachment of proline to tRNA(Pro) in a two-step reaction: proline is first activated by ATP to form Pro-AMP and then transferred to the acceptor end of tRNA(Pro). As ProRS can inadvertently accommodate and process non-cognate amino acids such as alanine and cysteine, to avoid such errors it has two additional distinct editing activities against alanine. One activity is designated as 'pretransfer' editing and involves the tRNA(Pro)-independent hydrolysis of activated Ala-AMP. The other activity is designated 'posttransfer' editing and involves deacylation of mischarged Ala-tRNA(Pro). The misacylated Cys-tRNA(Pro) is not edited by ProRS. In Campylobacter concisus (strain 13826), this protein is Proline--tRNA ligase.